The following is a 101-amino-acid chain: UPF0213 protein VC0395_0675/VC395_A0575 (101 aa).

One can recognise a GIY-YIG domain in the interval 9-85 (SPWFVYLVRC…KALSKSQKEA (77 aa)).

It belongs to the UPF0213 family.

This Vibrio cholerae serotype O1 (strain ATCC 39541 / Classical Ogawa 395 / O395) protein is UPF0213 protein VC0395_0675/VC395_A0575.